The sequence spans 447 residues: Membrane metalloprotease ARASP, chloroplastic (447 aa).

The transit peptide at 1-73 (MLLNISSSPI…YPDGERFDFR (73 aa)) directs the protein to the chloroplast. H102 contacts Zn(2+). Residue E103 is part of the active site. Zn(2+) is bound at residue H106. The helical transmembrane segment at 177–197 (SIVVSAGIIANVIFAYAIIFV) threads the bilayer. A PDZ domain is found at 202-244 (VGLPVQEAFPGVLVPEVKTFSAASRDGLLSGDVILAVDGTELS). Transmembrane regions (helical) follow at residues 379-399 (LAVI…ALIL) and 413-433 (VEQG…LFLI).

It belongs to the peptidase M50A family. The cofactor is Zn(2+). Expressed in green seedlings and cotyledons. Low levels of expression in roots, siliques and seeds.

Its subcellular location is the plastid. It localises to the chloroplast inner membrane. Functionally, metalloprotease essential for chloroplast and plant development. May be involved in regulated intramembrane proteolysis (RIP). This is Membrane metalloprotease ARASP, chloroplastic from Arabidopsis thaliana (Mouse-ear cress).